The chain runs to 213 residues: Adenylate kinase (213 aa).

Position 10–15 (Gly10–Ser15) interacts with ATP. The interval Ser30–Val60 is NMP. AMP contacts are provided by residues Thr31, Arg36, Lys58–Val60, Gly87–Arg90, and Gln94. The segment at Gly123 to Asp160 is LID. Arg124 is an ATP binding site. Zn(2+) contacts are provided by Cys127 and Cys130. Ile133–Tyr134 is a binding site for ATP. Positions 147 and 150 each coordinate Zn(2+). Arg157 and Arg168 together coordinate AMP. Gln196 contacts ATP.

The protein belongs to the adenylate kinase family. In terms of assembly, monomer.

It localises to the cytoplasm. It catalyses the reaction AMP + ATP = 2 ADP. It functions in the pathway purine metabolism; AMP biosynthesis via salvage pathway; AMP from ADP: step 1/1. Its function is as follows. Catalyzes the reversible transfer of the terminal phosphate group between ATP and AMP. Plays an important role in cellular energy homeostasis and in adenine nucleotide metabolism. The sequence is that of Adenylate kinase from Ureaplasma parvum serovar 3 (strain ATCC 27815 / 27 / NCTC 11736).